The sequence spans 176 residues: LFYRYQDCTFFNKKDILKLHARFYELAPNLVPMDYRKSPIVHVPMSLIIQMPELRENPFKERIVEAFSEDGEGNLTFNDFVDMFSVLCESAPRDLKASYAFKIYDFNTDNFICKEDLQLTLARLTKSELDEDEVVLVCDKVIEEADLDGDGKLGFADFEDMIAKAPDFLSTFHIRI.

3 EF-hand domains span residues 55 to 90 (RENPFKERIVEAFSEDGEGNLTFNDFVDMFSVLCES), 92 to 127 (PRDLKASYAFKIYDFNTDNFICKEDLQLTLARLTKS), and 133 to 168 (EVVLVCDKVIEEADLDGDGKLGFADFEDMIAKAPDF). Ca(2+)-binding residues include aspartate 105, asparagine 107, aspartate 109, aspartate 116, aspartate 146, aspartate 148, aspartate 150, lysine 152, and aspartate 157.

Monomer. Homodimer. Interacts with WHRN and MYO7A. Interacts with ITGA2B (via C-terminus cytoplasmic tail region); the interactions are stabilized/increased in a calcium and magnesium-dependent manner. Interacts with ITGA7 (via C-terminus cytoplasmic tail region); the interactions are stabilized/increased in a calcium and magnesium-dependent manner. Interacts with TMC1. Interacts with TMC2. As to expression, expressed in liver, heart, kidney, brain, spleen, stomach, ovary, testis and muscle.

It is found in the cytoplasm. It localises to the cell projection. Its subcellular location is the stereocilium. The protein resides in the photoreceptor inner segment. The protein localises to the cilium. It is found in the photoreceptor outer segment. It localises to the cell membrane. Its subcellular location is the sarcolemma. Its function is as follows. Calcium- and integrin-binding protein that plays a role in intracellular calcium homeostasis. Acts as an auxiliary subunit of the sensory mechanoelectrical transduction (MET) channel in hair cells. Essential for mechanoelectrical transduction (MET) currents in auditory hair cells and thereby required for hearing. Regulates the function of hair cell mechanotransduction by controlling the distribution of transmembrane channel-like proteins TMC1 and TMC2, and by regulating the function of the MET channels in hair cells. Required for the maintenance of auditory hair cell stereocilia bundle morphology and function and for hair-cell survival in the cochlea. Critical for proper photoreceptor cell maintenance and function. Plays a role in intracellular calcium homeostasis by decreasing ATP-induced calcium release. The chain is Calcium and integrin-binding family member 2 (CIB2) from Ovis aries (Sheep).